The sequence spans 79 residues: Small ribosomal subunit protein uS17 (79 aa).

Belongs to the universal ribosomal protein uS17 family. In terms of assembly, part of the 30S ribosomal subunit.

Functionally, one of the primary rRNA binding proteins, it binds specifically to the 5'-end of 16S ribosomal RNA. This is Small ribosomal subunit protein uS17 from Caulobacter sp. (strain K31).